Consider the following 370-residue polypeptide: Probable trehalose-phosphate phosphatase 6 (370 aa).

Belongs to the trehalose phosphatase family. A divalent metal cation serves as cofactor.

The enzyme catalyses alpha,alpha-trehalose 6-phosphate + H2O = alpha,alpha-trehalose + phosphate. Its pathway is glycan biosynthesis; trehalose biosynthesis. In terms of biological role, removes the phosphate from trehalose 6-phosphate to produce free trehalose. Trehalose accumulation in plant may improve abiotic stress tolerance. This Oryza sativa subsp. japonica (Rice) protein is Probable trehalose-phosphate phosphatase 6 (TPP6).